A 532-amino-acid chain; its full sequence is Phosphoribosylamine--glycine ligase, chloroplastic (532 aa).

Residues 1–75 constitute a chloroplast transit peptide; it reads MSSLCASNCY…IQRRLFLLRC (75 aa). The ATP-grasp domain maps to 204–412; sequence KNLCHKYNIP…LAKVLLAACK (209 aa).

It belongs to the GARS family.

It localises to the plastid. The protein localises to the chloroplast. It carries out the reaction 5-phospho-beta-D-ribosylamine + glycine + ATP = N(1)-(5-phospho-beta-D-ribosyl)glycinamide + ADP + phosphate + H(+). Its pathway is purine metabolism; IMP biosynthesis via de novo pathway; N(1)-(5-phospho-D-ribosyl)glycinamide from 5-phospho-alpha-D-ribose 1-diphosphate: step 2/2. The sequence is that of Phosphoribosylamine--glycine ligase, chloroplastic (PUR2) from Arabidopsis thaliana (Mouse-ear cress).